Reading from the N-terminus, the 202-residue chain is Imidazole glycerol phosphate synthase subunit HisH (202 aa).

A Glutamine amidotransferase type-1 domain is found at arginine 3–cysteine 202. Cysteine 79 acts as the Nucleophile in catalysis. Catalysis depends on residues histidine 183 and glutamate 185.

Heterodimer of HisH and HisF.

It localises to the cytoplasm. It carries out the reaction 5-[(5-phospho-1-deoxy-D-ribulos-1-ylimino)methylamino]-1-(5-phospho-beta-D-ribosyl)imidazole-4-carboxamide + L-glutamine = D-erythro-1-(imidazol-4-yl)glycerol 3-phosphate + 5-amino-1-(5-phospho-beta-D-ribosyl)imidazole-4-carboxamide + L-glutamate + H(+). The catalysed reaction is L-glutamine + H2O = L-glutamate + NH4(+). It functions in the pathway amino-acid biosynthesis; L-histidine biosynthesis; L-histidine from 5-phospho-alpha-D-ribose 1-diphosphate: step 5/9. IGPS catalyzes the conversion of PRFAR and glutamine to IGP, AICAR and glutamate. The HisH subunit catalyzes the hydrolysis of glutamine to glutamate and ammonia as part of the synthesis of IGP and AICAR. The resulting ammonia molecule is channeled to the active site of HisF. This chain is Imidazole glycerol phosphate synthase subunit HisH, found in Methanosarcina barkeri (strain Fusaro / DSM 804).